The primary structure comprises 324 residues: Acetyl-coenzyme A carboxylase carboxyl transferase subunit alpha (324 aa).

Residues 37 to 291 (ILEEKLENLE…DLMIRKTFEQ (255 aa)) form the CoA carboxyltransferase C-terminal domain.

The protein belongs to the AccA family. Acetyl-CoA carboxylase is a heterohexamer composed of biotin carboxyl carrier protein (AccB), biotin carboxylase (AccC) and two subunits each of ACCase subunit alpha (AccA) and ACCase subunit beta (AccD).

The protein localises to the cytoplasm. It catalyses the reaction N(6)-carboxybiotinyl-L-lysyl-[protein] + acetyl-CoA = N(6)-biotinyl-L-lysyl-[protein] + malonyl-CoA. The protein operates within lipid metabolism; malonyl-CoA biosynthesis; malonyl-CoA from acetyl-CoA: step 1/1. Its function is as follows. Component of the acetyl coenzyme A carboxylase (ACC) complex. First, biotin carboxylase catalyzes the carboxylation of biotin on its carrier protein (BCCP) and then the CO(2) group is transferred by the carboxyltransferase to acetyl-CoA to form malonyl-CoA. This chain is Acetyl-coenzyme A carboxylase carboxyl transferase subunit alpha, found in Bacillus cereus (strain B4264).